A 699-amino-acid polypeptide reads, in one-letter code: Ubiquitin-like modifier-activating enzyme atg7 (699 aa).

The short motif at 370–375 (GAGTLG) is the GXGXXG motif element. The active-site Glycyl thioester intermediate is the cysteine 550. The segment at 680-699 (MQWSEDEEGMDEEEGEGELI) is disordered. Over residues 682-699 (WSEDEEGMDEEEGEGELI) the composition is skewed to acidic residues.

This sequence belongs to the ATG7 family. Homodimer.

It is found in the cytoplasm. The protein resides in the preautophagosomal structure. E1-like activating enzyme involved in the 2 ubiquitin-like systems required for cytoplasm to vacuole transport (Cvt) and autophagy. Activates atg12 for its conjugation with apg-4/atg5 and apg-6/atg8 for its conjugation with phosphatidylethanolamine. Both systems are needed for the apg-6/atg8 association to Cvt vesicles and autophagosomes membranes. Autophagy is essential for maintenance of amino acid levels and protein synthesis under nitrogen starvation. Required for selective autophagic degradation of the nucleus (nucleophagy) as well as for mitophagy which contributes to regulate mitochondrial quantity and quality by eliminating the mitochondria to a basal level to fulfill cellular energy requirements and preventing excess ROS production. Plays a role in the regulation of filamentous growth and chronological longevity. This Neurospora crassa (strain ATCC 24698 / 74-OR23-1A / CBS 708.71 / DSM 1257 / FGSC 987) protein is Ubiquitin-like modifier-activating enzyme atg7 (apg-5).